The following is a 197-amino-acid chain: Adenylate kinase isoenzyme 6 homolog FAP7 (197 aa).

Residues Gly17, Gly19, Lys20, Ser21, and Ser22 each coordinate ATP. An NMPbind region spans residues 38 to 61; it reads NISDFAKDNDCFEGYDEGRKSHIV. Positions 113–123 are LID; the sequence is ARGYHDSKIEE. Arg114 serves as a coordination point for ATP. The disordered stretch occupies residues 176-197; the sequence is PDGVTNEYQGPRSDDEDDEDSE. Position 183 is a phosphotyrosine (Tyr183). Ser188 and Ser196 each carry phosphoserine.

This sequence belongs to the adenylate kinase family. AK6 subfamily. Interacts with small ribosomal subunit protein uS11B/RPS14B. Not a structural component of 43S pre-ribosomes, but transiently interacts with them by binding to uS11/RPS14.

It localises to the cytoplasm. The protein resides in the nucleus. It catalyses the reaction AMP + ATP = 2 ADP. The catalysed reaction is ATP + H2O = ADP + phosphate + H(+). Its function is as follows. Broad-specificity nucleoside monophosphate (NMP) kinase that catalyzes the reversible transfer of the terminal phosphate group between nucleoside triphosphates and monophosphates. Also has ATPase activity. Involved in the late cytoplasmic maturation steps of the 40S ribosomal particles, specifically 18S rRNA maturation. Required for cleavage of the 20S pre-rRNA at site D in the cytoplasm. While NMP activity is not required for ribosome maturation, ATPase activity is. Associates transiently with small ribosomal subunit protein uS11. ATP hydrolysis breaks the interaction with uS11. May temporarily remove uS11 from the ribosome to enable a conformational change of the ribosomal RNA that is needed for the final maturation step of the small ribosomal subunit. Promotes formation of the rotated state in 80S-like ribosomes, a key intermediate in translocation, thereby releasing the essential assembly factor DIM1 from pre-40S subunits. Its NMP activity may have a role in nuclear energy homeostasis. Involved in oxidative stress response. Required for POS9-dependent target gene transcription upon oxidative stress. In Saccharomyces cerevisiae (strain ATCC 204508 / S288c) (Baker's yeast), this protein is Adenylate kinase isoenzyme 6 homolog FAP7.